The sequence spans 266 residues: Type III pantothenate kinase (266 aa).

ATP is bound at residue 11-18 (DIGNTSTV). 111 to 114 (GADR) is a substrate binding site. Aspartate 113 serves as the catalytic Proton acceptor. K(+) is bound at residue aspartate 135. Threonine 138 lines the ATP pocket. Threonine 190 contacts substrate.

The protein belongs to the type III pantothenate kinase family. As to quaternary structure, homodimer. It depends on NH4(+) as a cofactor. K(+) is required as a cofactor.

It is found in the cytoplasm. It carries out the reaction (R)-pantothenate + ATP = (R)-4'-phosphopantothenate + ADP + H(+). The protein operates within cofactor biosynthesis; coenzyme A biosynthesis; CoA from (R)-pantothenate: step 1/5. In terms of biological role, catalyzes the phosphorylation of pantothenate (Pan), the first step in CoA biosynthesis. In Deinococcus geothermalis (strain DSM 11300 / CIP 105573 / AG-3a), this protein is Type III pantothenate kinase.